We begin with the raw amino-acid sequence, 225 residues long: Claudin-8 (225 aa).

The Cytoplasmic segment spans residues 1–7 (MATYALQ). A helical membrane pass occupies residues 8-28 (MAALVLGGVGMVGTVAVTIMP). Topologically, residues 29 to 81 (QWRVSAFIESNIVVFENRWEGLWMNCMRHANIRMQCKVYDSLLALSPDLQASR) are extracellular. A helical transmembrane segment spans residues 82 to 102 (GLMCAASVLAFLAFMTAILGM). The Cytoplasmic portion of the chain corresponds to 103–117 (KCTRCTGDDENVKSR). The chain crosses the membrane as a helical span at residues 118–138 (ILLTAGIIFFITGLVVLIPVS). Residues 139–166 (WVANSIIRDFYNPLVDVALKRELGEALY) are Extracellular-facing. A helical membrane pass occupies residues 167–187 (IGWTTALVLIAGGALFCCVFC). Topologically, residues 188 to 225 (CTERSNSYRYSVPSHRTTQRSFHAEKRSPSIYSKSQYV) are cytoplasmic. Lysine 213 participates in a covalent cross-link: Glycyl lysine isopeptide (Lys-Gly) (interchain with G-Cter in ubiquitin). The interval 224-225 (YV) is interactions with TJP1, TJP2 and TJP3.

The protein belongs to the claudin family. Can form heteropolymeric strands with other claudins. Interacts with CLDN4. Directly interacts with TJP1/ZO-1, TJP2/ZO-2 and TJP3/ZO-3. Interacts with KLHL3. In terms of processing, ubiquitinated by the BCR(KLHL3) E3 ubiquitin ligase complex in the kidney, leading to its degradation. In terms of tissue distribution, expressed primarily in lung and kidney. Present in both cortical and medullar collecting ducts (at protein level).

It is found in the cell junction. It localises to the tight junction. The protein localises to the cell membrane. The enzyme catalyses chloride(in) = chloride(out). It carries out the reaction bromide(in) = bromide(out). The catalysed reaction is iodide(out) = iodide(in). It catalyses the reaction fluoride(in) = fluoride(out). Can associate with other claudins to regulate tight junction structural and functional strand dynamics. May coassemble with CLDN4 into tight junction strands containing anion-selective channels that convey paracellular chloride permeability in renal collecting ducts. Cannot form tight junction strands on its own. This Mus musculus (Mouse) protein is Claudin-8.